Here is a 742-residue protein sequence, read N- to C-terminus: Envelope glycoprotein H (742 aa).

The N-terminal stretch at 1 to 29 (MRPGLPSYLIVLAVCLLSHLLSSRYGAEA) is a signal peptide. Residues 30 to 719 (ISEPLDKAFH…VVDATDSRLL (690 aa)) are Virion surface-facing. N-linked (GlcNAc...) asparagine; by host glycans are attached at residues Asn-55, Asn-62, Asn-67, and Asn-192. The interval 217 to 280 (YLIDELRYVK…QTEKHELLVL (64 aa)) is interaction with gL. Asn-641 and Asn-700 each carry an N-linked (GlcNAc...) asparagine; by host glycan. A helical transmembrane segment spans residues 720-740 (MMSVYALSAIIGIYLLYRMLK). Residues 741-742 (TC) are Intravirion-facing.

The protein belongs to the herpesviridae glycoprotein H family. Interacts with glycoprotein L (gL); this interaction is necessary for the correct processing and cell surface expression of gH. The heterodimer gH/gL seems to interact with gB trimers during fusion. Forms the envelope pentamer complex (PC) composed of gH, gL, UL128, UL130, and UL131A. The pentamer interacts with host NRP2. Forms the envelope trimer complex composed of gH, gL, and gO. The trimer interacts with host PDGFRA. The trimer also interacts with host EPHA2. Post-translationally, N-glycosylated, O-glycosylated, and sialylated.

Its subcellular location is the virion membrane. The protein resides in the host cell membrane. The protein localises to the host endosome membrane. Functionally, the heterodimer glycoprotein H-glycoprotein L is required for the fusion of viral and plasma membranes leading to virus entry into the host cell. Following initial binding to host receptor, membrane fusion is mediated by the fusion machinery composed of gB and the heterodimer gH/gL. May also be involved in the fusion between the virion envelope and the outer nuclear membrane during virion morphogenesis. In human cytomegalovirus, forms two distincts complexes to mediate viral entry, a trimer and a pentamer at the surface of the virion envelope. The gH-gL-gO trimer is required for infection in fibroblasts by interacting with host PDGFRA, and in glioblastoma cells by interacting with host EPHA2. The gH-gL-UL128-UL130-UL131A pentamer is essential for viral entry in epithelial, endothelial and myeloid cells via interaction with host NRP2. This Human cytomegalovirus (strain Towne) (HHV-5) protein is Envelope glycoprotein H.